The primary structure comprises 533 residues: Di/tripeptide-binding protein 3 (533 aa).

The N-terminal stretch at 1-24 (MRKILPLRAWLAAGLILGSPFSHA) is a signal peptide.

This sequence belongs to the bacterial solute-binding protein 5 family. The complex is composed of two ATP-binding proteins (DppD and DppF), two transmembrane proteins (DppB and DppC) and a solute-binding protein (DppA3). Five orthologous SBPs (DppA1-A5) are present in P.aeruginosa, which increases the substrate specificity of the DppBCDF transporter.

Part of the ABC transporter DppABCDF involved in the uptake of various di/tripeptides. Prefers dipeptides with acidic residues at the C-terminal end. Involved in the uptake of phaseolotoxin, a toxic tripeptide inhibiting the enzyme ornithine carbamoyltransferase. In Pseudomonas aeruginosa (strain UCBPP-PA14), this protein is Di/tripeptide-binding protein 3.